The chain runs to 310 residues: Ribonuclease HIII (310 aa).

One can recognise an RNase H type-2 domain in the interval 91 to 307 (YNCIGSDEAG…REKAQNLVTK (217 aa)). Residues Asp97, Glu98, and Asp202 each coordinate a divalent metal cation.

The protein belongs to the RNase HII family. RnhC subfamily. Mn(2+) serves as cofactor. The cofactor is Mg(2+).

It is found in the cytoplasm. The catalysed reaction is Endonucleolytic cleavage to 5'-phosphomonoester.. Endonuclease that specifically degrades the RNA of RNA-DNA hybrids. This chain is Ribonuclease HIII, found in Staphylococcus haemolyticus (strain JCSC1435).